The chain runs to 458 residues: Transmembrane protein 135 (458 aa).

A run of 6 helical transmembrane segments spans residues 68–88 (ILQS…FFCI), 96–116 (FYLW…AILV), 149–169 (TLRN…MFFF), 298–318 (FQLG…SCFL), 331–351 (IIAG…TISM), and 380–400 (IIYS…VQTL).

It belongs to the TMEM135 family.

The protein localises to the mitochondrion membrane. Its subcellular location is the peroxisome membrane. Functionally, involved in mitochondrial metabolism by regulating the balance between mitochondrial fusion and fission. May act as a regulator of mitochondrial fission that promotes DNM1L-dependent fission through activation of DNM1L. May be involved in peroxisome organization. In Bos taurus (Bovine), this protein is Transmembrane protein 135.